Here is a 217-residue protein sequence, read N- to C-terminus: Probable transaldolase (217 aa).

The active-site Schiff-base intermediate with substrate is K83.

The protein belongs to the transaldolase family. Type 3B subfamily.

The protein localises to the cytoplasm. The catalysed reaction is D-sedoheptulose 7-phosphate + D-glyceraldehyde 3-phosphate = D-erythrose 4-phosphate + beta-D-fructose 6-phosphate. It functions in the pathway carbohydrate degradation; pentose phosphate pathway; D-glyceraldehyde 3-phosphate and beta-D-fructose 6-phosphate from D-ribose 5-phosphate and D-xylulose 5-phosphate (non-oxidative stage): step 2/3. Transaldolase is important for the balance of metabolites in the pentose-phosphate pathway. The sequence is that of Probable transaldolase from Erythrobacter litoralis (strain HTCC2594).